Reading from the N-terminus, the 259-residue chain is Deoxyribose-phosphate aldolase (259 aa).

The Proton donor/acceptor role is filled by Asp102. The Schiff-base intermediate with acetaldehyde role is filled by Lys167. The active-site Proton donor/acceptor is Lys201.

It belongs to the DeoC/FbaB aldolase family. DeoC type 2 subfamily.

It is found in the cytoplasm. The enzyme catalyses 2-deoxy-D-ribose 5-phosphate = D-glyceraldehyde 3-phosphate + acetaldehyde. It participates in carbohydrate degradation; 2-deoxy-D-ribose 1-phosphate degradation; D-glyceraldehyde 3-phosphate and acetaldehyde from 2-deoxy-alpha-D-ribose 1-phosphate: step 2/2. Functionally, catalyzes a reversible aldol reaction between acetaldehyde and D-glyceraldehyde 3-phosphate to generate 2-deoxy-D-ribose 5-phosphate. This chain is Deoxyribose-phosphate aldolase, found in Escherichia coli O1:K1 / APEC.